We begin with the raw amino-acid sequence, 645 residues long: Ethylene response sensor 2 (645 aa).

Helical transmembrane passes span 5–25 (LLVQ…VTAA), 54–74 (VGDF…VYFV), 86–106 (VVCE…LAGF), and 125–145 (LTGI…PLLL). Cu cation contacts are provided by cysteine 97 and histidine 101. The GAF domain maps to 190–346 (DRHTILYTTL…VVADQVAVAI (157 aa)). The region spanning 389-623 (MMSDAMRCPV…VFRFQLRRSM (235 aa)) is the Histidine kinase domain.

It belongs to the ethylene receptor family. In terms of assembly, heteromer with ETR1. Cu cation serves as cofactor. In terms of processing, autophosphorylated predominantly on Ser residues. Expressed in etiolated seedlings, leaves, roots and stems. Highly expressed in flowers, stamens, pollen cells, tapetum cells, carpels and ovules.

The protein localises to the endoplasmic reticulum membrane. Its function is as follows. Ethylene receptor related to bacterial two-component regulators. Acts as a redundant negative regulator of ethylene signaling. The chain is Ethylene response sensor 2 (ERS2) from Arabidopsis thaliana (Mouse-ear cress).